The following is a 273-amino-acid chain: SUMO-1 cysteine protease S273R (273 aa).

Catalysis depends on residues His-168 and Asn-187. Gln-226 is a substrate binding site. The active-site Nucleophile is Cys-232.

The protein belongs to the peptidase C63 family.

The protein resides in the host cytoplasm. It is found in the virion. Functionally, cysteine protease that plays several role during infection including processing of the structural polyprotein or inhibition of the host immune response. Catalyzes the maturation of the pp220 and pp62 polyprotein precursors into core-shell proteins. Plays a role in the disruption of host pyroptosis via specific cleavage of gasdermin D/GSDMD. In addition, strongly decreases the host cGAS-STING signaling by targeting IKBKE via its enzymatic activity. Also impairs host FOXJ1-mediated antiviral effect via degradation of FOXJ1. This chain is SUMO-1 cysteine protease S273R, found in Ornithodoros (relapsing fever ticks).